We begin with the raw amino-acid sequence, 471 residues long: Pachytene checkpoint protein 2 homolog (471 aa).

Residue 213–220 (GPPGTGKT) participates in ATP binding.

The protein belongs to the AAA ATPase family. PCH2 subfamily.

In terms of biological role, plays a key role in chromosome recombination during meiosis. The protein is Pachytene checkpoint protein 2 homolog of Oryza sativa subsp. indica (Rice).